The sequence spans 158 residues: SsrA-binding protein (158 aa).

Belongs to the SmpB family.

It localises to the cytoplasm. Required for rescue of stalled ribosomes mediated by trans-translation. Binds to transfer-messenger RNA (tmRNA), required for stable association of tmRNA with ribosomes. tmRNA and SmpB together mimic tRNA shape, replacing the anticodon stem-loop with SmpB. tmRNA is encoded by the ssrA gene; the 2 termini fold to resemble tRNA(Ala) and it encodes a 'tag peptide', a short internal open reading frame. During trans-translation Ala-aminoacylated tmRNA acts like a tRNA, entering the A-site of stalled ribosomes, displacing the stalled mRNA. The ribosome then switches to translate the ORF on the tmRNA; the nascent peptide is terminated with the 'tag peptide' encoded by the tmRNA and targeted for degradation. The ribosome is freed to recommence translation, which seems to be the essential function of trans-translation. The sequence is that of SsrA-binding protein from Caldicellulosiruptor saccharolyticus (strain ATCC 43494 / DSM 8903 / Tp8T 6331).